A 378-amino-acid chain; its full sequence is Probable dihydroorotase-like protein (378 aa).

This sequence belongs to the metallo-dependent hydrolases superfamily. DHOase family. PyrC' subfamily.

Non-functional DHOase. This Helicobacter pylori (strain ATCC 700392 / 26695) (Campylobacter pylori) protein is Probable dihydroorotase-like protein (pyrC').